The primary structure comprises 127 residues: uncharacterized protein (127 aa).

The helical transmembrane segment at 91–113 (IYLIVSIAVSILAIIAFFIFLML) threads the bilayer.

The protein resides in the membrane. This is an uncharacterized protein from Bacillus subtilis (strain 168).